Here is a 569-residue protein sequence, read N- to C-terminus: Interleukin-1 receptor type 1 (569 aa).

The signal sequence occupies residues 1 to 17; the sequence is MKVLLRLICFIALLISS. Over 18 to 336 the chain is Extracellular; it reads LEADKCKERE…LIYPVTNFQK (319 aa). 4 disulfides stabilise this stretch: Cys-23-Cys-104, Cys-44-Cys-96, Cys-121-Cys-164, and Cys-142-Cys-196. 3 Ig-like C2-type domains span residues 23–110, 118–210, and 226–328; these read CKER…IKIS, PNLC…YPIT, and PVIV…IQLI. A glycan (N-linked (GlcNAc...) asparagine) is linked at Asn-100. Asn-193, Asn-233, Asn-249, Asn-263, and Asn-297 each carry an N-linked (GlcNAc...) asparagine glycan. An intrachain disulfide couples Cys-248 to Cys-312. Residues 337–356 form a helical membrane-spanning segment; the sequence is HMIGICVTLTVIIVCSVFIY. Over 357–569 the chain is Cytoplasmic; the sequence is KIFKIDIVLW…LQREAHVPLG (213 aa). Residues 383–538 form the TIR domain; it reads KTYDAYILYP…RFWKNVRYHM (156 aa). Residue Glu-470 is part of the active site. At Tyr-496 the chain carries Phosphotyrosine. Positions 540-569 are disordered; that stretch reads VQRRSPSSKHQLLSPATKEKLQREAHVPLG. Basic and acidic residues predominate over residues 556-569; the sequence is TKEKLQREAHVPLG.

Belongs to the interleukin-1 receptor family. As to quaternary structure, the interleukin-1 receptor complex is a heterodimer of IL1R1 and IL1RAP. Interacts with PIK3R1. Interacts with IL1A. In terms of processing, a soluble form (sIL1R1) is probably produced by proteolytic cleavage at the cell surface (shedding). Post-translationally, rapidly phosphorylated on Tyr-496 in response to IL-1, which creates a SH2 binding site for the PI 3-kinase regulatory subunit PIK3R1. Expressed in T-helper cell subsets. Preferentially expressed in T-helper 1 (Th1) cells.

It localises to the membrane. It is found in the cell membrane. Its subcellular location is the secreted. The enzyme catalyses NAD(+) + H2O = ADP-D-ribose + nicotinamide + H(+). Its function is as follows. Receptor for IL1A, IL1B and IL1RN. After binding to interleukin-1 associates with the coreceptor IL1RAP to form the high affinity interleukin-1 receptor complex which mediates interleukin-1-dependent activation of NF-kappa-B, MAPK and other pathways. Signaling involves the recruitment of adapter molecules such as TOLLIP, MYD88, and IRAK1 or IRAK2 via the respective TIR domains of the receptor/coreceptor subunits. Binds ligands with comparable affinity and binding of antagonist IL1RN prevents association with IL1RAP to form a signaling complex. Involved in IL1B-mediated costimulation of IFNG production from T-helper 1 (Th1) cells. The polypeptide is Interleukin-1 receptor type 1 (IL1R1) (Homo sapiens (Human)).